We begin with the raw amino-acid sequence, 729 residues long: Phosphoribosylformylglycinamidine synthase subunit PurL (729 aa).

H54 is a catalytic residue. Y57 and K96 together coordinate ATP. E98 provides a ligand contact to Mg(2+). Substrate is bound by residues 99-102 (SHNH) and R121. The active-site Proton acceptor is the H100. A Mg(2+)-binding site is contributed by D122. A substrate-binding site is contributed by Q245. D273 is a Mg(2+) binding site. 317–319 (ETQ) is a substrate binding site. Residues D495 and G532 each coordinate ATP. Residue N533 participates in Mg(2+) binding. S535 serves as a coordination point for substrate.

It belongs to the FGAMS family. Monomer. Part of the FGAM synthase complex composed of 1 PurL, 1 PurQ and 2 PurS subunits.

Its subcellular location is the cytoplasm. It catalyses the reaction N(2)-formyl-N(1)-(5-phospho-beta-D-ribosyl)glycinamide + L-glutamine + ATP + H2O = 2-formamido-N(1)-(5-O-phospho-beta-D-ribosyl)acetamidine + L-glutamate + ADP + phosphate + H(+). Its pathway is purine metabolism; IMP biosynthesis via de novo pathway; 5-amino-1-(5-phospho-D-ribosyl)imidazole from N(2)-formyl-N(1)-(5-phospho-D-ribosyl)glycinamide: step 1/2. In terms of biological role, part of the phosphoribosylformylglycinamidine synthase complex involved in the purines biosynthetic pathway. Catalyzes the ATP-dependent conversion of formylglycinamide ribonucleotide (FGAR) and glutamine to yield formylglycinamidine ribonucleotide (FGAM) and glutamate. The FGAM synthase complex is composed of three subunits. PurQ produces an ammonia molecule by converting glutamine to glutamate. PurL transfers the ammonia molecule to FGAR to form FGAM in an ATP-dependent manner. PurS interacts with PurQ and PurL and is thought to assist in the transfer of the ammonia molecule from PurQ to PurL. This Staphylococcus haemolyticus (strain JCSC1435) protein is Phosphoribosylformylglycinamidine synthase subunit PurL.